Here is a 70-residue protein sequence, read N- to C-terminus: Large ribosomal subunit protein bL31 (70 aa).

Zn(2+) is bound by residues Cys16, Cys18, Cys38, and Cys41.

The protein belongs to the bacterial ribosomal protein bL31 family. Type A subfamily. As to quaternary structure, part of the 50S ribosomal subunit. It depends on Zn(2+) as a cofactor.

Binds the 23S rRNA. This is Large ribosomal subunit protein bL31 from Bifidobacterium longum (strain DJO10A).